A 558-amino-acid chain; its full sequence is DALR anticodon-binding domain-containing protein 3 (558 aa).

Residues 213–240 (KALENSAYRDRETEKGKRRSRGEEIEGE) are disordered.

The protein is DALR anticodon-binding domain-containing protein 3 (dalrd3) of Danio rerio (Zebrafish).